The following is a 457-amino-acid chain: UDP-N-acetylglucosamine 1-carboxyvinyltransferase (457 aa).

Residue Lys-34–Asn-35 participates in phosphoenolpyruvate binding. UDP-N-acetyl-alpha-D-glucosamine is bound at residue Arg-104. Catalysis depends on Cys-128, which acts as the Proton donor. Cys-128 bears the 2-(S-cysteinyl)pyruvic acid O-phosphothioketal mark. The UDP-N-acetyl-alpha-D-glucosamine site is built by Asp-319 and Ile-341. The tract at residues Ile-436 to Ala-457 is disordered. Over residues Lys-447–Ala-457 the composition is skewed to basic and acidic residues.

It belongs to the EPSP synthase family. MurA subfamily.

It is found in the cytoplasm. The catalysed reaction is phosphoenolpyruvate + UDP-N-acetyl-alpha-D-glucosamine = UDP-N-acetyl-3-O-(1-carboxyvinyl)-alpha-D-glucosamine + phosphate. The protein operates within cell wall biogenesis; peptidoglycan biosynthesis. Its function is as follows. Cell wall formation. Adds enolpyruvyl to UDP-N-acetylglucosamine. The polypeptide is UDP-N-acetylglucosamine 1-carboxyvinyltransferase (Prochlorococcus marinus subsp. pastoris (strain CCMP1986 / NIES-2087 / MED4)).